The primary structure comprises 218 residues: Oxidoreductase claN (218 aa).

NADP(+) contacts are provided by lysine 38, aspartate 57, and asparagine 82. The active-site Proton donor is serine 134. 3 residues coordinate NADP(+): tyrosine 148, lysine 152, and threonine 183. The active-site Proton acceptor is the tyrosine 148. Residue lysine 152 is the Lowers pKa of active site Tyr of the active site.

Belongs to the short-chain dehydrogenases/reductases (SDR) family.

It participates in pigment biosynthesis. Its function is as follows. Oxidoreductase; part of the gene cluster that mediates the biosynthesis of the bianthraquinone cladofulvin, a conidial pigment not required for virulence but that plays a role in fitness and resistance to environmental stresses including UV light and low-temperature stress. The pathway begins with the synthesis of atrochrysone thioester by the polyketide synthase (PKS) claG. The atrochrysone carboxyl ACP thioesterase claF then breaks the thioester bond and releases the atrochrysone carboxylic acid from claG. This compound is decarboxylated by claH to yield emodin, which is further converted to chrysophanol hydroquinone by the reductase claC and the dehydratase claB. The cytochrome P450 monooxygenase claM then catalyzes the dimerization of nataloe-emodin to cladofulvin. This is Oxidoreductase claN from Passalora fulva (Tomato leaf mold).